Here is a 113-residue protein sequence, read N- to C-terminus: Iron-sulfur cluster insertion protein ErpA (113 aa).

Iron-sulfur cluster is bound by residues C41, C105, and C107.

This sequence belongs to the HesB/IscA family. Homodimer. The cofactor is iron-sulfur cluster.

Required for insertion of 4Fe-4S clusters for at least IspG. The protein is Iron-sulfur cluster insertion protein ErpA of Vibrio vulnificus (strain YJ016).